Reading from the N-terminus, the 498-residue chain is ATP synthase subunit beta, chloroplastic (498 aa).

Thr6 bears the Phosphothreonine mark. Ser13 is modified (phosphoserine). 172-179 contributes to the ATP binding site; it reads GGAGVGKT.

This sequence belongs to the ATPase alpha/beta chains family. As to quaternary structure, F-type ATPases have 2 components, CF(1) - the catalytic core - and CF(0) - the membrane proton channel. CF(1) has five subunits: alpha(3), beta(3), gamma(1), delta(1), epsilon(1). CF(0) has four main subunits: a(1), b(1), b'(1) and c(9-12).

It localises to the plastid. Its subcellular location is the chloroplast thylakoid membrane. The enzyme catalyses ATP + H2O + 4 H(+)(in) = ADP + phosphate + 5 H(+)(out). Its function is as follows. Produces ATP from ADP in the presence of a proton gradient across the membrane. The catalytic sites are hosted primarily by the beta subunits. The polypeptide is ATP synthase subunit beta, chloroplastic (Raphanus sativus (Radish)).